Consider the following 96-residue polypeptide: MPKTQTLEQTKLSEPKMYKVILLNDDVTTMDFVIEILMNIFHQNLEKASQTMLEIHHNGSGICGIYTQEIALSKQKKVIDAAKLANFPLQAKVEEE.

This sequence belongs to the ClpS family. As to quaternary structure, binds to the N-terminal domain of the chaperone ClpA.

Involved in the modulation of the specificity of the ClpAP-mediated ATP-dependent protein degradation. The protein is ATP-dependent Clp protease adapter protein ClpS of Campylobacter jejuni subsp. jejuni serotype O:6 (strain 81116 / NCTC 11828).